We begin with the raw amino-acid sequence, 129 residues long: D-ribose pyranase (129 aa).

The active-site Proton donor is His20. Substrate-binding positions include Asp28, His96, and 118 to 120 (YAN).

The protein belongs to the RbsD / FucU family. RbsD subfamily. Homodecamer.

It localises to the cytoplasm. The enzyme catalyses beta-D-ribopyranose = beta-D-ribofuranose. The protein operates within carbohydrate metabolism; D-ribose degradation; D-ribose 5-phosphate from beta-D-ribopyranose: step 1/2. Its function is as follows. Catalyzes the interconversion of beta-pyran and beta-furan forms of D-ribose. The polypeptide is D-ribose pyranase (Staphylococcus haemolyticus (strain JCSC1435)).